Here is a 162-residue protein sequence, read N- to C-terminus: uncharacterized protein (162 aa).

The HTH asnC-type domain occupies Leu-6–Pro-99. Positions Ile-25 to Lys-44 form a DNA-binding region, H-T-H motif.

This is an uncharacterized protein from Pyrococcus horikoshii (strain ATCC 700860 / DSM 12428 / JCM 9974 / NBRC 100139 / OT-3).